A 213-amino-acid polypeptide reads, in one-letter code: 24 kDa ookinete surface protein (213 aa).

A signal peptide spans 1-28 (MNFKYSFIFLFFIQLAIRYNNAKITVDT). The region spanning 30 to 59 (CKGGKLIQMSNHYECKCPSGYALKTENTCE) is the EGF-like 1; truncated domain. EGF-like domains lie at 60–108 (PIVK…NICK) and 108–148 (KPTR…GKCT). 6 disulfide bridges follow: Cys64-Cys80, Cys74-Cys94, Cys96-Cys107, Cys112-Cys122, Cys117-Cys134, and Cys136-Cys147. In terms of domain architecture, EGF-like 4; truncated spans 151 to 175 (GETKCLLKCKAAEECKLTGKHYECV). Asn190 carries the GPI-anchor amidated asparagine lipid modification. N-linked (GlcNAc...) asparagine glycosylation is present at Asn190. A propeptide spans 191–213 (SSFMNGMSIISIIALLVIYVIVM) (removed in mature form).

It is found in the cell membrane. This chain is 24 kDa ookinete surface protein, found in Plasmodium berghei (strain Anka).